Reading from the N-terminus, the 824-residue chain is Silver exporting P-type ATPase (824 aa).

Positions 89-112 (ASEHHHHHDHHEVSPDKIKQSHRQ) are disordered. Residues 98-112 (HHEVSPDKIKQSHRQ) show a composition bias toward basic and acidic residues. The next 6 helical transmembrane spans lie at 167–187 (FWLG…SHLF), 200–220 (TWLQ…PFFA), 234–254 (FTLV…ATVF), 268–288 (LVAI…LGQV), 427–447 (WFVP…SVWG), and 455–475 (GLIA…GLAT). Aspartate 511 serves as the catalytic 4-aspartylphosphate intermediate. Helical transmembrane passes span 764 to 784 (IRQN…VAAG) and 785 to 805 (LLYP…AMAL).

It belongs to the cation transport ATPase (P-type) (TC 3.A.3) family. Type IB subfamily.

The protein localises to the cell membrane. The catalysed reaction is Ag(+)(in) + ATP + H2O = Ag(+)(out) + ADP + phosphate + H(+). Its function is as follows. Component of the sil cation-efflux system that confers resistance to silver. This chain is Silver exporting P-type ATPase (silP), found in Salmonella typhimurium.